We begin with the raw amino-acid sequence, 842 residues long: uncharacterized protein (842 aa).

Disordered stretches follow at residues Met1–Glu20 and Asn142–Ser209. The uDENN FNIP1/2-type domain occupies Thr35 to Leu422. A compositionally biased stretch (polar residues) spans Ala183–Ser209. The region spanning Ala430–Glu772 is the cDENN FNIP1/2-type domain. Residues Ser573 and Ser590 each carry the phosphoserine modification. The dDENN FNIP1/2-type domain occupies Tyr777 to Cys842.

It is found in the cytoplasm. This is an uncharacterized protein from Schizosaccharomyces pombe (strain 972 / ATCC 24843) (Fission yeast).